The primary structure comprises 203 residues: MENLIIYLLAYLIGAIPFGLLLAQIFAKTNIKNAGSKSIGATNVLRVVKESNPKLAKTLAVATVILDALKGVLPILMAKFYGFDDNILWTMAVLAVFGHCFSPYLKFEGGKGVATGAGVLAVFLPFEIICALLAWFIIGKVFKISSLASLGAMIVLIATSFIFHYDIPVINTHAPIFIIAFIVVYKHIPNILRLIGKQECKVI.

6 helical membrane-spanning segments follow: residues 5–25 (IIYL…LAQI), 58–78 (TLAV…ILMA), 87–107 (ILWT…YLKF), 118–138 (GVLA…WFII), 150–170 (LGAM…IPVI), and 176–196 (IFII…RLIG).

Belongs to the PlsY family. Probably interacts with PlsX.

The protein resides in the cell inner membrane. It carries out the reaction an acyl phosphate + sn-glycerol 3-phosphate = a 1-acyl-sn-glycero-3-phosphate + phosphate. Its pathway is lipid metabolism; phospholipid metabolism. Functionally, catalyzes the transfer of an acyl group from acyl-phosphate (acyl-PO(4)) to glycerol-3-phosphate (G3P) to form lysophosphatidic acid (LPA). This enzyme utilizes acyl-phosphate as fatty acyl donor, but not acyl-CoA or acyl-ACP. In Campylobacter lari (strain RM2100 / D67 / ATCC BAA-1060), this protein is Glycerol-3-phosphate acyltransferase.